The primary structure comprises 350 residues: Protein FAM118B (350 aa).

An N-acetylalanine modification is found at alanine 2. Serine 9 bears the Phosphoserine mark. Positions 330–350 (AREGQLNGSSAAHGEIRGCST) are disordered.

Belongs to the FAM118 family.

It localises to the nucleus. Its subcellular location is the cajal body. Functionally, may play a role in Cajal bodies formation. The protein is Protein FAM118B (Fam118b) of Rattus norvegicus (Rat).